The sequence spans 763 residues: High glucose sensor RGT2 (763 aa).

Residues 1 to 28 are disordered; the sequence is MNDSQNCLRQREENSHLNPGNDFGHHQG. At 1–99 the chain is on the cytoplasmic side; sequence MNDSQNCLRQ…PLPLRSNVMS (99 aa). The chain crosses the membrane as a helical span at residues 100 to 120; sequence VLVGIFVAVGGFLFGYDTGLI. At 121–144 the chain is on the extracellular side; sequence NSITDMPYVKTYIAPNHSYFTTSQ. The N-linked (GlcNAc...) asparagine glycan is linked to Asn-136. The helical transmembrane segment at 145–165 threads the bilayer; sequence IAILVSFLSLGTFFGALIAPY. The Cytoplasmic segment spans residues 166-175; that stretch reads ISDSYGRKPT. The helical transmembrane segment at 176–196 threads the bilayer; sequence IMFSTAVIFSIGNSLQVASGG. A topological domain (extracellular) is located at residue Leu-197. A helical membrane pass occupies residues 198–218; that stretch reads VLLIVGRVISGIGIGIISAVV. Over 219 to 231 the chain is Cytoplasmic; that stretch reads PLYQAEAAQKNLR. Residues 232 to 252 form a helical membrane-spanning segment; that stretch reads GAIISSYQWAITIGLLVSSAV. Residues 253–266 lie on the Extracellular side of the membrane; the sequence is SQGTHSKNGPSSYR. The chain crosses the membrane as a helical span at residues 267–287; sequence IPIGLQYVWSSILAVGMIFLP. Residues 288-357 lie on the Cytoplasmic side of the membrane; sequence ESPRYYVLKD…SENRPKQILR (70 aa). A helical transmembrane segment spans residues 358–378; the sequence is IFTGIAIQAFQQASGINFIFY. Over 379–393 the chain is Extracellular; it reads YGVNFFNNTGVDNSY. Residue Asn-385 is glycosylated (N-linked (GlcNAc...) asparagine). The helical transmembrane segment at 394-414 threads the bilayer; sequence LVSFISYAVNVAFSIPGMYLV. Over 415–421 the chain is Cytoplasmic; that stretch reads DRIGRRP. The helical transmembrane segment at 422 to 442 threads the bilayer; the sequence is VLLAGGVIMAIANLVIAIVGV. Topologically, residues 443–452 are extracellular; sequence SEGKTVVASK. The helical transmembrane segment at 453-473 threads the bilayer; the sequence is IMIAFICLFIAAFSATWGGVV. The Cytoplasmic segment spans residues 474–491; it reads WVVSAELYPLGVRSKCTA. A helical membrane pass occupies residues 492 to 512; sequence ICAAANWLVNFTCALITPYIV. Over 513–524 the chain is Extracellular; it reads DVGSHTSSMGPK. Residues 525 to 545 form a helical membrane-spanning segment; the sequence is IFFIWGGLNVVAVIVVYFAVY. At 546 to 763 the chain is on the cytoplasmic side; the sequence is ETRGLTLEEI…SKHSQYTSPQ (218 aa). Residues 725–737 are compositionally biased toward low complexity; that stretch reads SSTTSNDTSFSPS. The interval 725 to 763 is disordered; that stretch reads SSTTSNDTSFSPSHNSNARTSSNWTSDLASKHSQYTSPQ. A compositionally biased stretch (polar residues) spans 738-763; the sequence is HNSNARTSSNWTSDLASKHSQYTSPQ.

The protein belongs to the major facilitator superfamily. Sugar transporter (TC 2.A.1.1) family. In terms of assembly, interacts with YCK1. Interacts with MTH1 and STD1. Phosphorylated in the C-terminal tail on Yck consensus sites in a yeast casein kinases YCK1 and YCK2 (Yck)-dependent manner. This phosphorylation is required for interaction with HXT corepressors MTH1 and STD1 and ultimately HXT expression.

It localises to the cell membrane. Functionally, low-affinity high glucose sensor that is part of the sensor/receptor-repressor (SSR) glucose-signaling pathway, which detects extracellular glucose and induces expression of glucose transporters that bring glucose into the cell. The transporter-like sensor generates an intracellular signal in the presence of high levels of glucose to promote high glucose-induced expression of HXT1. Binding of glucose to the RGT2 transmembrane domain activates a downstream signaling cascade, leading to phosphorylation of the RGT1 corepressors MTH1 and STD1, targeting them for SCF(Grr1)-dependent ubiquitination and degradation. Depletion of the corepressors robs RGT1 of its ability to repress expression of HXT genes, leading to accumulation of glucose transporters in the plasma membrane. Even though RGT2 is similar to glucose transporters, it appears to be unable to transport glucose. This chain is High glucose sensor RGT2, found in Saccharomyces cerevisiae (strain ATCC 204508 / S288c) (Baker's yeast).